A 340-amino-acid chain; its full sequence is CMP-N-acetylneuraminate-beta-galactosamide-alpha-2,3-sialyltransferase 1 (340 aa).

Residues 1–13 (MVTLRKRTLKVLT) are Cytoplasmic-facing. The chain crosses the membrane as a helical; Signal-anchor for type II membrane protein span at residues 14–34 (FLVLFIFLTSFFLNYSHTMVA). Residues 35-340 (TTWFPKQMVL…INKIRIFKGR (306 aa)) lie on the Lumenal side of the membrane. Intrachain disulfides connect Cys-59–Cys-64, Cys-61–Cys-139, and Cys-142–Cys-281. Asn-79 carries N-linked (GlcNAc...) asparagine glycosylation. Gln-105 provides a ligand contact to substrate. N-linked (GlcNAc...) asparagine glycosylation occurs at Asn-114. Residues Asn-147 and Asn-170 each coordinate substrate. Asn-201 carries an N-linked (GlcNAc...) asparagine glycan. Substrate contacts are provided by Tyr-230, Tyr-266, Gly-270, Gly-290, His-299, and His-316. Asn-323 carries N-linked (GlcNAc...) asparagine glycosylation.

Belongs to the glycosyltransferase 29 family. Post-translationally, the soluble form derives from the membrane form by proteolytic processing. As to expression, expressed in several tissues. Highest expression in lung, liver, skeletal muscle, kidney, pancreas, spleen and placenta.

Its subcellular location is the golgi apparatus. The protein resides in the golgi stack membrane. It is found in the trans-Golgi network membrane. The protein localises to the secreted. It catalyses the reaction a beta-D-galactosyl-(1-&gt;3)-N-acetyl-alpha-D-galactosaminyl derivative + CMP-N-acetyl-beta-neuraminate = an N-acetyl-alpha-neuraminyl-(2-&gt;3)-beta-D-galactosyl-(1-&gt;3)-N-acetyl-alpha-D-galactosaminyl derivative + CMP + H(+). The enzyme catalyses a ganglioside GM1 + CMP-N-acetyl-beta-neuraminate = a ganglioside GD1a + CMP + H(+). It carries out the reaction a ganglioside GM1 (d18:1(4E)) + CMP-N-acetyl-beta-neuraminate = a ganglioside GD1a (d18:1(4E)) + CMP + H(+). The catalysed reaction is ganglioside GM1 (d18:1(4E)/18:0) + CMP-N-acetyl-beta-neuraminate = ganglioside GD1a (18:1(4E)/18:0) + CMP + H(+). It catalyses the reaction a ganglioside GA1 + CMP-N-acetyl-beta-neuraminate = a ganglioside GM1b + CMP + H(+). The enzyme catalyses a ganglioside GA1 (d18:1(4E)) + CMP-N-acetyl-beta-neuraminate = a ganglioside GM1b (d18:1(4E)) + CMP + H(+). It carries out the reaction a ganglioside GD1b + CMP-N-acetyl-beta-neuraminate = a ganglioside GT1b + CMP + H(+). The catalysed reaction is a 3-O-[beta-D-galactosyl-(1-&gt;3)-N-acetyl-alpha-D-galactosaminyl]-L-threonyl-[protein] + CMP-N-acetyl-beta-neuraminate = a 3-O-[N-acetyl-alpha-neuraminyl-(2-&gt;3)-beta-D-galactosyl-(1-&gt;3)-N-acetyl-alpha-D-galactosaminyl]-L-threonyl-[protein] + CMP + H(+). It catalyses the reaction a 3-O-[beta-D-galactosyl-(1-&gt;3)-N-acetyl-alpha-D-galactosaminyl]-L-seryl-[protein] + CMP-N-acetyl-beta-neuraminate = 3-O-[N-acetyl-alpha-neuraminyl-(2-&gt;3)-beta-D-galactosyl-(1-&gt;3)-N-acetyl-alpha-D-galactosaminyl]-L-seryl-[protein] + CMP + H(+). It functions in the pathway protein modification; protein glycosylation. It participates in glycolipid biosynthesis. Functionally, a beta-galactoside alpha2-&gt;3 sialyltransferase involved in terminal sialylation of glycoproteins and glycolipids. Catalyzes the transfer of sialic acid (N-acetyl-neuraminic acid; Neu5Ac) from the nucleotide sugar donor CMP-Neu5Ac onto acceptor Galbeta-(1-&gt;3)-GalNAc-terminated glycoconjugates through an alpha2-3 linkage. Adds sialic acid to the core 1 O-glycan, Galbeta-(1-&gt;3)-GalNAc-O-Ser/Thr, which is a major structure of mucin-type O-glycans. As part of a homeostatic mechanism that regulates CD8-positive T cell numbers, sialylates core 1 O-glycans of T cell glycoproteins, SPN/CD43 and PTPRC/CD45. Prevents premature apoptosis of thymic CD8-positive T cells prior to peripheral emigration, whereas in the secondary lymphoid organs controls the survival of CD8-positive memory T cells generated following a successful immune response. Transfers sialic acid to asialofetuin, presumably onto Galbeta-(1-&gt;3)-GalNAc-O-Ser. Sialylates GM1a, GA1 and GD1b gangliosides to form GD1a, GM1b and GT1b, respectively. The polypeptide is CMP-N-acetylneuraminate-beta-galactosamide-alpha-2,3-sialyltransferase 1 (Homo sapiens (Human)).